The following is a 330-amino-acid chain: DNA-binding death effector domain-containing protein 2 (330 aa).

Positions 25–104 (SLHRMFEVVG…RHDLLPHLAR (80 aa)) constitute a DED domain. A Nuclear localization signal motif is present at residues 104 to 109 (RKRRRP). A disordered region spans residues 104-195 (RKRRRPVSPE…HQELGRPSSE (92 aa)). Residues 137–147 (ASSSSDSPQSQ) show a composition bias toward low complexity. The Bipartite nuclear localization signal signature appears at 156–174 (KRQRRSRGRPSSGARQRRR).

In terms of assembly, interacts with CASP8, CASP10 and GTF3C3. Homodimerizes and heterodimerizes with DEDD. In terms of tissue distribution, expression is high in liver, heart, kidney, and testis but low in brain, spleen, lung, and skeleton muscle.

Its subcellular location is the nucleus. It localises to the nucleolus. May play a critical role in death receptor-induced apoptosis and may target CASP8 and CASP10 to the nucleus. May regulate degradation of intermediate filaments during apoptosis. May play a role in the general transcription machinery in the nucleus and might be an important regulator of the activity of GTF3C3. In Mus musculus (Mouse), this protein is DNA-binding death effector domain-containing protein 2 (Dedd2).